We begin with the raw amino-acid sequence, 215 residues long: UPF0502 protein PSEEN2299 (215 aa).

The protein belongs to the UPF0502 family.

This is UPF0502 protein PSEEN2299 from Pseudomonas entomophila (strain L48).